The following is a 164-amino-acid chain: MPDKDEITHDAQSENEESLPLARPEGQFMKSIALDTPNSPEVFSIMKNPPEVDVQCNIDSRAIDERNGVYEVVLDLKTEARIKDKDSPDETRVAFVCKLKYCGVFTIKNLTQEQLRQTLLVEAPTLLFPFARRIIATATTDAGFPPLMLAPINFAQKYAESQRD.

The segment covering 1–12 has biased composition (basic and acidic residues); the sequence is MPDKDEITHDAQ. The interval 1–22 is disordered; sequence MPDKDEITHDAQSENEESLPLA.

Belongs to the SecB family. In terms of assembly, homotetramer, a dimer of dimers. One homotetramer interacts with 1 SecA dimer.

The protein resides in the cytoplasm. Its function is as follows. One of the proteins required for the normal export of preproteins out of the cell cytoplasm. It is a molecular chaperone that binds to a subset of precursor proteins, maintaining them in a translocation-competent state. It also specifically binds to its receptor SecA. The polypeptide is Protein-export protein SecB (Neorickettsia sennetsu (strain ATCC VR-367 / Miyayama) (Ehrlichia sennetsu)).